A 237-amino-acid chain; its full sequence is ATP synthase subunit a (237 aa).

The next 5 helical transmembrane spans lie at 18–38 (LTLLAMSLLAVLLVFAFVYWA), 77–97 (SLFLFSLFLFLVVANNLGLMA), 114–134 (NIAFDLSMSFLITLICHVEGI), 167–187 (LALRIYGNIFAGEVLSGLLVT), and 208–230 (AFSVFISCVQAYVFTMLTSMYLG).

The protein belongs to the ATPase A chain family. In terms of assembly, F-type ATPases have 2 components, CF(1) - the catalytic core - and CF(0) - the membrane proton channel. CF(1) has five subunits: alpha(3), beta(3), gamma(1), delta(1), epsilon(1). CF(0) has three main subunits: a(1), b(2) and c(9-12). The alpha and beta chains form an alternating ring which encloses part of the gamma chain. CF(1) is attached to CF(0) by a central stalk formed by the gamma and epsilon chains, while a peripheral stalk is formed by the delta and b chains.

It localises to the cell membrane. Its function is as follows. Key component of the proton channel; it plays a direct role in the translocation of protons across the membrane. The sequence is that of ATP synthase subunit a from Streptococcus gordonii (strain Challis / ATCC 35105 / BCRC 15272 / CH1 / DL1 / V288).